Consider the following 232-residue polypeptide: Enterobactin synthase component D (232 aa).

Residues aspartate 106, glutamate 108, and glutamate 150 each contribute to the Mg(2+) site.

It belongs to the P-Pant transferase superfamily. EntD family. In terms of assembly, entB, EntD, EntE, and EntF form a multienzyme complex called enterobactin synthase. Mg(2+) is required as a cofactor.

It is found in the membrane. It carries out the reaction apo-[aryl-carrier protein] + CoA = holo-[aryl-carrier protein] + adenosine 3',5'-bisphosphate + H(+). It catalyses the reaction apo-[peptidyl-carrier protein] + CoA = holo-[peptidyl-carrier protein] + adenosine 3',5'-bisphosphate + H(+). It participates in siderophore biosynthesis; enterobactin biosynthesis. Its function is as follows. Involved in the biosynthesis of the siderophore enterobactin (enterochelin), which is a macrocyclic trimeric lactone of N-(2,3-dihydroxybenzoyl)-serine. The serine trilactone serves as a scaffolding for the three catechol functionalities that provide hexadentate coordination for the tightly ligated iron(2+) atoms. Plays an essential role in the assembly of the enterobactin by catalyzing the transfer of the 4'-phosphopantetheine (Ppant) moiety from coenzyme A to the apo-domains of both EntB (ArCP domain) and EntF (PCP domain) to yield their holo-forms which make them competent for the activation of 2,3-dihydroxybenzoate (DHB) and L-serine, respectively. This Salmonella austin protein is Enterobactin synthase component D.